We begin with the raw amino-acid sequence, 71 residues long: Putative defensin-like protein 303 (71 aa).

An N-terminal signal peptide occupies residues 1–25 (MKSNKATFFLGLLLVYAFCIMLIES). 3 disulfide bridges follow: C27–C45, C33–C50, and C39–C52.

This sequence belongs to the DEFL family.

The protein localises to the secreted. The protein is Putative defensin-like protein 303 of Arabidopsis thaliana (Mouse-ear cress).